The sequence spans 684 residues: MSAKDFLVELGTEELPPKALNSLGEAFLSGIEKGLKAAGLSYAAARFYAAPRRLAVLVEQLAVQQPDRTVNLDGPPLQAAFDASGNPTQAALGFAKKCGVDLQQIDKSGPKLRFSQTIAGQPAAGLLPGIVEASLNELPIPKRMRWAARREEFVRPTQWLVMLFGDDVVECEILAQKAGRESRGHRFHNPDNVRISSPAAYLEDLRGAHVLADFAERRELIAKRVAELAAEQQGSAIVPPSLLDEVTALVEWPVPLVCSFEERFLEVPQEALITTMQDNQKYFCLLDANGKLLPRFITVANVESKAPENIVSGNEKVVRPRLTDAEFFFKQDKKQPLESFNERLRNVVFQAQLGTVFEKAQRVSGLAAYIAERIGGNAQNAARAGILSKCDLATEMVGEFPEMQGIAGYYYATHGGEAEDVALALNEQYMPRGAGAELPSTLTGAAVAVADKLDTLVGIFGIGMLPTGSKDPYALRRAALGVLRILIEKQLDLDLVAAVNAAVEQYGDKVKAAGLAEQVLDFVFDRLRARYEDEGVDVAVYQSVRALKPSSPLDFDQRVQAVQAFRQLPEAEALAAANKRVSNILAKSEDEVPPNVDASLLVEAAEKALGSAVANAESEVAPLAAARDYRAALARLAALREPVDTFFADVMVNVDDAAVRANRYALLAKLRGSFLGVADISLLG.

It belongs to the class-II aminoacyl-tRNA synthetase family. In terms of assembly, tetramer of two alpha and two beta subunits.

The protein resides in the cytoplasm. The enzyme catalyses tRNA(Gly) + glycine + ATP = glycyl-tRNA(Gly) + AMP + diphosphate. In Pseudomonas aeruginosa (strain UCBPP-PA14), this protein is Glycine--tRNA ligase beta subunit.